Reading from the N-terminus, the 339-residue chain is Anthranilate phosphoribosyltransferase (339 aa).

5-phospho-alpha-D-ribose 1-diphosphate-binding positions include Gly-80, 83–84 (GD), Thr-88, 90–93 (NIST), 108–116 (KHGNRSVSS), and Ser-120. Residue Gly-80 coordinates anthranilate. Residue Ser-92 coordinates Mg(2+). An anthranilate-binding site is contributed by Asn-111. Arg-166 is an anthranilate binding site. Mg(2+) contacts are provided by Asp-225 and Glu-226.

This sequence belongs to the anthranilate phosphoribosyltransferase family. In terms of assembly, homodimer. Mg(2+) is required as a cofactor.

It carries out the reaction N-(5-phospho-beta-D-ribosyl)anthranilate + diphosphate = 5-phospho-alpha-D-ribose 1-diphosphate + anthranilate. Its pathway is amino-acid biosynthesis; L-tryptophan biosynthesis; L-tryptophan from chorismate: step 2/5. Its function is as follows. Catalyzes the transfer of the phosphoribosyl group of 5-phosphorylribose-1-pyrophosphate (PRPP) to anthranilate to yield N-(5'-phosphoribosyl)-anthranilate (PRA). In Moorella thermoacetica (strain ATCC 39073 / JCM 9320), this protein is Anthranilate phosphoribosyltransferase.